We begin with the raw amino-acid sequence, 61 residues long: Cytotoxin homolog 3 (61 aa).

Intrachain disulfides connect cysteine 3-cysteine 22, cysteine 15-cysteine 39, cysteine 43-cysteine 54, and cysteine 55-cysteine 60.

Belongs to the three-finger toxin family. Short-chain subfamily. Orphan group XV sub-subfamily. Expressed by the venom gland.

The protein resides in the secreted. The protein localises to the target cell membrane. In terms of biological role, has low cytotoxic activity. The chain is Cytotoxin homolog 3 from Naja melanoleuca (Forest cobra).